A 290-amino-acid polypeptide reads, in one-letter code: MSYNNPYQLETPFEESYELDEGSSAIGAEGHDFVGFMNKISQINRDLDKYDHTINQVDSLHKRLLTEVNEEQASHLRHSLDNFVAQATDLQFKLKNEIKSAQRDGIHDTNKQAQAENSRQRFLKLIQDYRIVDSNYKEENKEQAKRQYMIIQPEATEDEVEAAISDVGGQQIFSQALLNANRRGEAKTALAEVQARHQELLKLEKSMAELTQLFNDMEELVIEQQENVDVIDKNVEDAQLDVEQGVGHTDKAVKSARKARKNKIRCWLIVFAIIVVVVVVVVVPAVVKTR.

The Cytoplasmic segment spans residues 1 to 265 (MSYNNPYQLE…ARKARKNKIR (265 aa)). The region spanning 190 to 252 (LAEVQARHQE…EQGVGHTDKA (63 aa)) is the t-SNARE coiled-coil homology domain. Residues 266–287 (CWLIVFAIIVVVVVVVVVPAVV) form a helical; Anchor for type IV membrane protein membrane-spanning segment. The Extracellular portion of the chain corresponds to 288 to 290 (KTR).

Belongs to the syntaxin family.

The protein localises to the membrane. Its function is as follows. Required for vesicle fusion with the plasma membrane. This Saccharomyces cerevisiae (strain ATCC 204508 / S288c) (Baker's yeast) protein is Protein SSO1 (SSO1).